The sequence spans 334 residues: MRKFVFLMIIETIHIILKILIIVIPLLVAVAYLTLAERKVLGYMQARKGPNVVGVYGLLQPLADGIKLFTKELVIPHYANLFIYVAAPVLSFTLALIAWGVIPYDKGVVISDLKIGILFTLAVSSISVYAILMSGWASQSKYAFLGAIRAAAQMISYEVSIGLIIITVILCVGSLNITEIVLAQSSGIWFFFPLFPVAMMFFASALAETNRAPFDLTEGESELVSGYNVEYASMSFALFFLAEYAHIILMSCLTTILFLGGWLSPIVFFKGGPAWFGLKTSFIILLFIWVRASFPRMRYDQLMALLWKSYLPLSLAFVVLVASLLFGLNGLPPS.

9 consecutive transmembrane segments (helical) span residues 4–24 (FVFLMIIETIHIILKILIIVI), 82–102 (FIYVAAPVLSFTLALIAWGVI), 115–135 (IGILFTLAVSSISVYAILMSG), 161–181 (IGLIIITVILCVGSLNITEIV), 187–207 (GIWFFFPLFPVAMMFFASALA), 222–242 (ELVSGYNVEYASMSFALFFLA), 247–267 (IILMSCLTTILFLGGWLSPIV), 268–288 (FFKGGPAWFGLKTSFIILLFI), and 311–331 (LPLSLAFVVLVASLLFGLNGL).

It belongs to the complex I subunit 1 family.

It localises to the mitochondrion inner membrane. The enzyme catalyses a ubiquinone + NADH + 5 H(+)(in) = a ubiquinol + NAD(+) + 4 H(+)(out). In terms of biological role, core subunit of the mitochondrial membrane respiratory chain NADH dehydrogenase (Complex I) that is believed to belong to the minimal assembly required for catalysis. Complex I functions in the transfer of electrons from NADH to the respiratory chain. The immediate electron acceptor for the enzyme is believed to be ubiquinone. This is NADH-ubiquinone oxidoreductase chain 1 (ND1) from Metridium senile (Brown sea anemone).